A 436-amino-acid chain; its full sequence is Xylose isomerase (436 aa).

Residues histidine 100 and aspartate 103 contribute to the active site. Positions 231, 267, 270, 295, 306, 308, and 338 each coordinate Mg(2+).

The protein belongs to the xylose isomerase family. In terms of assembly, homotetramer. It depends on Mg(2+) as a cofactor.

Its subcellular location is the cytoplasm. The catalysed reaction is alpha-D-xylose = alpha-D-xylulofuranose. This Chelativorans sp. (strain BNC1) protein is Xylose isomerase.